Reading from the N-terminus, the 207-residue chain is Holliday junction branch migration complex subunit RuvA (207 aa).

The tract at residues 1-65 is domain I; sequence MYDYIRGILT…ETEHVLYGFS (65 aa). A domain II region spans residues 66-144; it reads SRRERECFRM…DLLPLDSKAI (79 aa). The tract at residues 145–155 is flexible linker; sequence ASWESVKPSCM. Positions 155 to 207 are domain III; sequence MDEGIQALAALGYSKPSAERMIAEAMSELPENASLAEILPIALKKNLQGLNKS.

This sequence belongs to the RuvA family. In terms of assembly, homotetramer. Forms an RuvA(8)-RuvB(12)-Holliday junction (HJ) complex. HJ DNA is sandwiched between 2 RuvA tetramers; dsDNA enters through RuvA and exits via RuvB. An RuvB hexamer assembles on each DNA strand where it exits the tetramer. Each RuvB hexamer is contacted by two RuvA subunits (via domain III) on 2 adjacent RuvB subunits; this complex drives branch migration. In the full resolvosome a probable DNA-RuvA(4)-RuvB(12)-RuvC(2) complex forms which resolves the HJ.

The protein resides in the cytoplasm. The RuvA-RuvB-RuvC complex processes Holliday junction (HJ) DNA during genetic recombination and DNA repair, while the RuvA-RuvB complex plays an important role in the rescue of blocked DNA replication forks via replication fork reversal (RFR). RuvA specifically binds to HJ cruciform DNA, conferring on it an open structure. The RuvB hexamer acts as an ATP-dependent pump, pulling dsDNA into and through the RuvAB complex. HJ branch migration allows RuvC to scan DNA until it finds its consensus sequence, where it cleaves and resolves the cruciform DNA. The polypeptide is Holliday junction branch migration complex subunit RuvA (Chlamydia caviae (strain ATCC VR-813 / DSM 19441 / 03DC25 / GPIC) (Chlamydophila caviae)).